Consider the following 376-residue polypeptide: MKILVDENMPYVEPLFGDLGDIIPVNGRTLTAEQVREADVLLVRSVTKVNAELLSGNNKLKFVGSATIGTDHVDLAYLAERNIPFSNAPGCNATAVGEFAFIAMLELAQRFNSPLKGKVVGIVGAGNTGTATAKCLQAYGIKVLLNDPIKAAEGDPRSFVSLETIMAQADIISLHVPITRTGEHKTKYLFDEARLKALKPNTWFVNCCRGDVIDNQALIKVKQQRDDLKLVLDVWEGEPTPLPELVPLAEFATPHIAGYSLEGKARGTFMLYQKLCQLLNITADKSLLDLLPSFNIKAVELATAPNEKALLQLARFVYDLRDDDKMFRNTFLNENGFDTMRKNHQHRREFSALALAYDGQSEVDWLSNLGFSGVGQ.

2 residues coordinate substrate: Ser-45 and Thr-67. An NAD(+)-binding site is contributed by Asp-147. Arg-209 is a catalytic residue. Asp-233 serves as a coordination point for NAD(+). The active site involves Glu-238. The active-site Proton donor is the His-255. Residue Gly-258 participates in NAD(+) binding. Tyr-259 serves as a coordination point for substrate.

It belongs to the D-isomer specific 2-hydroxyacid dehydrogenase family. PdxB subfamily. As to quaternary structure, homodimer.

The protein resides in the cytoplasm. It carries out the reaction 4-phospho-D-erythronate + NAD(+) = (R)-3-hydroxy-2-oxo-4-phosphooxybutanoate + NADH + H(+). Its pathway is cofactor biosynthesis; pyridoxine 5'-phosphate biosynthesis; pyridoxine 5'-phosphate from D-erythrose 4-phosphate: step 2/5. Functionally, catalyzes the oxidation of erythronate-4-phosphate to 3-hydroxy-2-oxo-4-phosphonooxybutanoate. In Shewanella baltica (strain OS195), this protein is Erythronate-4-phosphate dehydrogenase.